A 529-amino-acid polypeptide reads, in one-letter code: Acid-sensing ion channel 1C (529 aa).

Topologically, residues 1–51 (MTAMKGDSEDSIESMRPSNLQVFANNSTLHGMSHIFAYGHMTFRRFLWTLS) are cytoplasmic. The helical transmembrane segment at 52–68 (FMGSLGLLMYVCMDRVY) threads the bilayer. Topologically, residues 69-427 (YYFEFPHVTK…EKIEQKKAYE (359 aa)) are extracellular. N-linked (GlcNAc...) asparagine glycans are attached at residues Asn86, Asn155, and Asn161. 7 cysteine pairs are disulfide-bonded: Cys95–Cys196, Cys174–Cys181, Cys292–Cys367, Cys310–Cys363, Cys314–Cys361, Cys323–Cys345, and Cys325–Cys337. An N-linked (GlcNAc...) asparagine glycan is attached at Asn185. 2 N-linked (GlcNAc...) asparagine glycosylation sites follow: Asn368 and Asn395. Residues 428-458 (VAGLLGDIGGQMGLFIGASVLTILEIFDYLY) form a discontinuously helical membrane-spanning segment. The GAS motif; ion selectivity filter signature appears at 444–446 (GAS). At 459–529 (EVLKDKILGS…PFVVGSNSGK (71 aa)) the chain is on the cytoplasmic side.

It belongs to the amiloride-sensitive sodium channel (TC 1.A.6) family. ASIC1 subfamily. In terms of assembly, homotrimer. Heterotrimer; with other ASIC proteins producing channel with different properties. Interacts with asic1a. Expressed in central nervous system.

It is found in the cell membrane. Its subcellular location is the postsynaptic cell membrane. The protein localises to the cell projection. It localises to the dendrite. The enzyme catalyses Na(+)(in) = Na(+)(out). It catalyses the reaction K(+)(in) = K(+)(out). The catalysed reaction is Li(+)(in) = Li(+)(out). It carries out the reaction Ca(2+)(in) = Ca(2+)(out). With respect to regulation, inhibited by the diuretic drug amiloride. In terms of biological role, forms voltage-independent, pH-gated trimeric sodium channels that act as postsynaptic excitatory receptors in the nervous system, playing a crucial role in regulating synaptic plasticity, learning, and memory. Upon extracellular pH drop this channel elicits transient, fast activating, and completely desensitizing inward currents. Displays high selectivity for sodium ions but can also permit the permeation of other cations. The protein is Acid-sensing ion channel 1C of Danio rerio (Zebrafish).